A 394-amino-acid chain; its full sequence is Aspergillopepsin-1 (394 aa).

The N-terminal stretch at 1 to 20 (MVVFSKTAALVLGLSSAVSA) is a signal peptide. Positions 21–69 (APAPTRKGFTINQIARPANKTRTINLPGMYARSLAKFGGTVPQSVKEAA) are cleaved as a propeptide — activation peptide. In terms of domain architecture, Peptidase A1 spans 85 to 391 (YLTPVTVGKS…NSEGPKLGFA (307 aa)). Catalysis depends on residues D101 and D283. A disulfide bridge links C319 with C354.

The protein belongs to the peptidase A1 family. In terms of assembly, monomer.

The protein localises to the secreted. It catalyses the reaction Hydrolysis of proteins with broad specificity. Generally favors hydrophobic residues in P1 and P1', but also accepts Lys in P1, which leads to activation of trypsinogen. Does not clot milk.. Its function is as follows. Secreted aspartic endopeptidase that allows assimilation of proteinaceous substrates. The scissile peptide bond is attacked by a nucleophilic water molecule activated by two aspartic residues in the active site. Shows a broad primary substrate specificity. Favors hydrophobic residues at the P1 and P1' positions, but also accepts a lysine residue in the P1 position, leading to the activation of trypsinogen and chymotrypsinogen A. The protein is Aspergillopepsin-1 (pepA) of Aspergillus niger (strain ATCC MYA-4892 / CBS 513.88 / FGSC A1513).